Reading from the N-terminus, the 331-residue chain is Sideroflexin-5 (331 aa).

4 consecutive transmembrane segments (helical) span residues 104 to 126 (PFGW…LLFW), 153 to 175 (YIGA…TYFI), 243 to 265 (TTMV…MPYL), and 278 to 300 (HIFV…ALAL).

It belongs to the sideroflexin family.

It localises to the mitochondrion inner membrane. It catalyses the reaction citrate(in) = citrate(out). Mitochondrial amino-acid transporter. This is Sideroflexin-5 from Caenorhabditis elegans.